The primary structure comprises 248 residues: Functional amyloid sbunit FapE (248 aa).

Positions 1-20 (MNTSRWLTALCLAASMPAYA) are cleaved as a signal peptide.

The protein belongs to the FapE family. In terms of assembly, a minor component of purified amyloid fibrils. Fibrils are resistant to boiling in 2% (weight/vol) SDS and require &gt;90% (vol/vol) formic acid to dissolve.

It localises to the fimbrium. Its subcellular location is the secreted. In terms of biological role, a minor component of the functional amyloid in this bacterium. Upon overexpression of the endogenous six-gene locus (fapA-fapF) in situ, cells form large clumps during liquid growth, make large amounts of biofilm and produce amyloid fibrils. Expression of the 6 gene operon in E.coli strain BL21(DE3) induces flocculation and biofilm formation with copious extracellular fibrils. This Pseudomonas fluorescens protein is Functional amyloid sbunit FapE.